Consider the following 509-residue polypeptide: Hyaluronidase PH-20 (509 aa).

The N-terminal stretch at methionine 1–threonine 35 is a signal peptide. Disulfide bonds link cysteine 60–cysteine 351 and cysteine 224–cysteine 238. Asparagine 82 carries an N-linked (GlcNAc...) asparagine glycan. Glutamate 148 serves as the catalytic Proton donor. 4 N-linked (GlcNAc...) asparagine glycosylation sites follow: asparagine 166, asparagine 235, asparagine 254, and asparagine 368. 3 disulfide bridges follow: cysteine 376/cysteine 387, cysteine 381/cysteine 435, and cysteine 437/cysteine 464. The N-linked (GlcNAc...) asparagine glycan is linked to asparagine 393. A lipid anchor (GPI-anchor amidated serine) is attached at serine 490. A propeptide spans alanine 491–leucine 509 (removed in mature form).

This sequence belongs to the glycosyl hydrolase 56 family. In terms of processing, N-glycosylated. Testis.

Its subcellular location is the cell membrane. The catalysed reaction is Random hydrolysis of (1-&gt;4)-linkages between N-acetyl-beta-D-glucosamine and D-glucuronate residues in hyaluronate.. In terms of biological role, involved in sperm-egg adhesion. Upon fertilization sperm must first penetrate a layer of cumulus cells that surrounds the egg before reaching the zona pellucida. The cumulus cells are embedded in a matrix containing hyaluronic acid which is formed prior to ovulation. This protein aids in penetrating the layer of cumulus cells by digesting hyaluronic acid. This is Hyaluronidase PH-20 (SPAM1) from Homo sapiens (Human).